The sequence spans 483 residues: Replication factor C large subunit (483 aa).

ATP is bound at residue 44 to 51 (GSPGVGKT). Residues 415-483 (AVDHGGGIFA…DGQAGLSDFM (69 aa)) form a disordered region. Over residues 430–443 (AQSDTESDDDDDGD) the composition is skewed to acidic residues. Positions 451-463 (DEPKEESVNREQS) are enriched in basic and acidic residues.

This sequence belongs to the activator 1 small subunits family. RfcL subfamily. As to quaternary structure, heteromultimer composed of small subunits (RfcS) and large subunits (RfcL).

Functionally, part of the RFC clamp loader complex which loads the PCNA sliding clamp onto DNA. This is Replication factor C large subunit from Natronomonas pharaonis (strain ATCC 35678 / DSM 2160 / CIP 103997 / JCM 8858 / NBRC 14720 / NCIMB 2260 / Gabara) (Halobacterium pharaonis).